The chain runs to 678 residues: Pentatricopeptide repeat-containing protein At5g39980, chloroplastic (678 aa).

A chloroplast-targeting transit peptide spans 1 to 64; the sequence is MYIEIASSSS…NKKVWRKQPE (64 aa). PPR repeat units lie at residues 154 to 188, 189 to 223, 224 to 258, 259 to 293, 294 to 328, 329 to 363, 364 to 398, 399 to 433, 434 to 468, 469 to 503, 535 to 569, 570 to 604, 605 to 638, and 639 to 674; these read SVFAYNVVLRNVLRAKQFDIAHGLFDEMRQRALAP, DRYTYSTLITSFGKEGMFDSALSWLQKMEQDRVSG, DLVLYSNLIELSRRLCDYSKAISIFSRLKRSGITP, DLVAYNSMINVYGKAKLFREARLLIKEMNEAGVLP, NTVSYSTLLSVYVENHKFLEALSVFAEMKEVNCAL, DLTTCNIMIDVYGQLDMVKEADRLFWSLRKMDIEP, NVVSYNTILRVYGEAELFGEAIHLFRLMQRKDIEQ, NVVTYNTMIKIYGKTMEHEKATNLVQEMQSRGIEP, NAITYSTIISIWGKAGKLDRAATLFQKLRSSGVEI, DQVLYQTMIVAYERVGLMGHAKRLLHELKLPDNIP, DISVFGCMINLYSRNQRYVNVIEVFEKMRTAGYFP, DSNVIAMVLNAYGKQREFEKADTVYREMQEEGCVF, PDEVHFQMLSLYSSKKDFEMVESLFQRLESDPNV, and NSKELHLVVAALYERADKLNDASRVMNRMRERGILK.

Belongs to the PPR family. P subfamily.

The protein resides in the plastid. It localises to the chloroplast. In Arabidopsis thaliana (Mouse-ear cress), this protein is Pentatricopeptide repeat-containing protein At5g39980, chloroplastic.